A 440-amino-acid chain; its full sequence is Tyrosine--tRNA ligase (440 aa).

Y46 provides a ligand contact to L-tyrosine. Residues 51 to 60 carry the 'HIGH' region motif; sequence PTAASLHIGN. The L-tyrosine site is built by Y181 and Q185. Positions 241–245 match the 'KMSKS' region motif; it reads KFGKS. Position 244 (K244) interacts with ATP. The S4 RNA-binding domain maps to 373 to 439; that stretch reads DRVIDAAQAA…GKKALGAVEN (67 aa).

Belongs to the class-I aminoacyl-tRNA synthetase family. TyrS type 1 subfamily. Homodimer.

The protein resides in the cytoplasm. It catalyses the reaction tRNA(Tyr) + L-tyrosine + ATP = L-tyrosyl-tRNA(Tyr) + AMP + diphosphate + H(+). In terms of biological role, catalyzes the attachment of tyrosine to tRNA(Tyr) in a two-step reaction: tyrosine is first activated by ATP to form Tyr-AMP and then transferred to the acceptor end of tRNA(Tyr). The chain is Tyrosine--tRNA ligase from Bifidobacterium longum (strain NCC 2705).